The following is a 121-amino-acid chain: Small ribosomal subunit protein uS11 (121 aa).

The protein belongs to the universal ribosomal protein uS11 family. In terms of assembly, part of the 30S ribosomal subunit. Interacts with proteins S7 and S18. Binds to IF-3.

Functionally, located on the platform of the 30S subunit, it bridges several disparate RNA helices of the 16S rRNA. Forms part of the Shine-Dalgarno cleft in the 70S ribosome. The protein is Small ribosomal subunit protein uS11 of Mycoplasma genitalium (strain ATCC 33530 / DSM 19775 / NCTC 10195 / G37) (Mycoplasmoides genitalium).